Reading from the N-terminus, the 189-residue chain is Crossover junction endodeoxyribonuclease RuvC (189 aa).

Active-site residues include D7, E68, and D141. Positions 7, 68, and 141 each coordinate Mg(2+).

Belongs to the RuvC family. In terms of assembly, homodimer which binds Holliday junction (HJ) DNA. The HJ becomes 2-fold symmetrical on binding to RuvC with unstacked arms; it has a different conformation from HJ DNA in complex with RuvA. In the full resolvosome a probable DNA-RuvA(4)-RuvB(12)-RuvC(2) complex forms which resolves the HJ. Requires Mg(2+) as cofactor.

It is found in the cytoplasm. It carries out the reaction Endonucleolytic cleavage at a junction such as a reciprocal single-stranded crossover between two homologous DNA duplexes (Holliday junction).. Functionally, the RuvA-RuvB-RuvC complex processes Holliday junction (HJ) DNA during genetic recombination and DNA repair. Endonuclease that resolves HJ intermediates. Cleaves cruciform DNA by making single-stranded nicks across the HJ at symmetrical positions within the homologous arms, yielding a 5'-phosphate and a 3'-hydroxyl group; requires a central core of homology in the junction. The consensus cleavage sequence is 5'-(A/T)TT(C/G)-3'. Cleavage occurs on the 3'-side of the TT dinucleotide at the point of strand exchange. HJ branch migration catalyzed by RuvA-RuvB allows RuvC to scan DNA until it finds its consensus sequence, where it cleaves and resolves the cruciform DNA. The sequence is that of Crossover junction endodeoxyribonuclease RuvC from Nocardia farcinica (strain IFM 10152).